Reading from the N-terminus, the 397-residue chain is DNA-directed RNA polymerase subunit Rpo1C (397 aa).

This sequence belongs to the RNA polymerase beta' chain family. As to quaternary structure, part of the RNA polymerase complex.

It is found in the cytoplasm. It catalyses the reaction RNA(n) + a ribonucleoside 5'-triphosphate = RNA(n+1) + diphosphate. DNA-dependent RNA polymerase (RNAP) catalyzes the transcription of DNA into RNA using the four ribonucleoside triphosphates as substrates. Forms part of the jaw domain. This chain is DNA-directed RNA polymerase subunit Rpo1C, found in Pyrococcus horikoshii (strain ATCC 700860 / DSM 12428 / JCM 9974 / NBRC 100139 / OT-3).